Reading from the N-terminus, the 127-residue chain is MQNKKIAHIVRIEMFEEKIDRLDLIFTKYVEYKFPLYLLGKLWLYKFIRRKFNLIGPLNEQILSPYLQFNLYFDKSKARKETFKVYLGKIGFVLLHVFYLSCIAYYDSFLYAKVMNDWLEEVMRTRY.

The chain crosses the membrane as a helical span at residues 85 to 107 (VYLGKIGFVLLHVFYLSCIAYYD).

The protein localises to the mitochondrion membrane. This is an uncharacterized protein from Dictyostelium discoideum (Social amoeba).